Here is a 633-residue protein sequence, read N- to C-terminus: DEAD-box ATP-dependent RNA helicase 27 (633 aa).

Positions M1–K17 are enriched in basic and acidic residues. Residues M1–E147 are disordered. Positions A2–Q34 form a coiled coil. Acidic residues-rich tracts occupy residues M37–D47 and D74–E83. The segment covering K88–Q97 has biased composition (basic residues). Composition is skewed to acidic residues over residues N103–E114 and S131–E140. Residues K117 to N153 adopt a coiled-coil conformation. The short motif at K154 to A182 is the Q motif element. The Helicase ATP-binding domain maps to I185–I360. A198 to T205 contacts ATP. The DEAD box signature appears at D308 to D311. Positions R386–L534 constitute a Helicase C-terminal domain. The disordered stretch occupies residues K608–Y633.

This sequence belongs to the DEAD box helicase family. DDX18/HAS1 subfamily.

The catalysed reaction is ATP + H2O = ADP + phosphate + H(+). This is DEAD-box ATP-dependent RNA helicase 27 (RH27) from Arabidopsis thaliana (Mouse-ear cress).